Reading from the N-terminus, the 334-residue chain is Beta-hexosaminidase (334 aa).

Residues aspartate 62, arginine 70, arginine 130, and 160–161 (KH) each bind substrate. Histidine 173 serves as the catalytic Proton donor/acceptor. Aspartate 243 acts as the Nucleophile in catalysis.

The protein belongs to the glycosyl hydrolase 3 family. NagZ subfamily.

Its subcellular location is the cytoplasm. The enzyme catalyses Hydrolysis of terminal non-reducing N-acetyl-D-hexosamine residues in N-acetyl-beta-D-hexosaminides.. It functions in the pathway cell wall biogenesis; peptidoglycan recycling. Plays a role in peptidoglycan recycling by cleaving the terminal beta-1,4-linked N-acetylglucosamine (GlcNAc) from peptide-linked peptidoglycan fragments, giving rise to free GlcNAc, anhydro-N-acetylmuramic acid and anhydro-N-acetylmuramic acid-linked peptides. The polypeptide is Beta-hexosaminidase (Photobacterium profundum (strain SS9)).